The primary structure comprises 607 residues: MAPQQNGAEVDGIHTGKIYSVSGPVVVAEDMIGVAMYELVKVGHDQLVGEVIRINGDQATIQVYEETAGVMVGDPVLRTGKPLSVELGPGLLNNIYDGIQRPLEKIAEASNSIYIPRGIATPALDRKKKWEFTPTMKVGDHIAGGDVWGTVYENSFISVHKILLPPRARGTITRIAEKGEYTVEEKILEVEFDGKKTEYPMMQTWPVRVPRPAAEKHSANQPFLVGQRVLDALFPSVQGGTVAIPGAFGCGKTVISQSVSKFSNSDVIVYVGCGERGNEMAEVLKDFPELSIEVDGRKEPIMKRTTLIANTSNMPVAAREASIYTGITVAEYFRDQGMNVAMMADSSSRWAEALREISGRLGEMPADQGFPAYLGAKLASFYERAGKVQALGSPPREGSVSIVGAVSPPGGDFSDPVTSATLGIVQVFWGLDKKLAQRKHFPSINTSVSYSKYLTILDKWYEREYPDFPRLRDRIRQLLSDSEELDQVVQLVGKSALSDPDKITLDMATLIKEDFLQQNGYSDYDQFCPIWKTEWMMKLMMGFHDEAQKAIAQGQNWNKVREATQDLQAQLKSLKFEVPSEGQEKICKKYEAIQQQMLDKFASVIDE.

246–253 (GAFGCGKT) contributes to the ATP binding site.

It belongs to the ATPase alpha/beta chains family. In terms of assembly, V-ATPase is a heteromultimeric enzyme composed of a peripheral catalytic V1 complex (components A to H) attached to an integral membrane V0 proton pore complex (components: a, c, c', c'', d, e, f and VOA1).

Its subcellular location is the vacuole membrane. The catalysed reaction is ATP + H2O + 4 H(+)(in) = ADP + phosphate + 5 H(+)(out). Catalytic subunit of the V1 complex of vacuolar(H+)-ATPase (V-ATPase), a multisubunit enzyme composed of a peripheral complex (V1) that hydrolyzes ATP and a membrane integral complex (V0) that translocates protons. V-ATPase is responsible for acidifying and maintaining the pH of intracellular compartments. The polypeptide is V-type proton ATPase catalytic subunit A (vma-1) (Neurospora crassa (strain ATCC 24698 / 74-OR23-1A / CBS 708.71 / DSM 1257 / FGSC 987)).